Consider the following 924-residue polypeptide: Hexokinase-3 (924 aa).

Residues 1 to 27 (MAAIEPSGLHPGERDSSCPQEGIPRPS) form a disordered region. Hexokinase domains follow at residues 27–471 (SGSL…MVTA) and 477–913 (ATHR…LVTR). Residues 84–220 (HGTEQGDFLV…TYNIDVVAMV (137 aa)) form a hexokinase small subdomain 1 region. 95–102 (ELGATGAS) is a binding site for ATP. Residue 95–104 (ELGATGASLR) participates in D-glucose 6-phosphate binding. Residues Ser168, 185-186 (TK), and 221-222 (ND) contribute to the D-glucose site. Positions 221–460 (NDTVGTMMGC…CDVSFIPSVD (240 aa)) are hexokinase large subdomain 1. Positions 222 and 245 each coordinate D-glucose 6-phosphate. Residues Asn248, Glu273, and 304-307 (QRFE) each bind D-glucose. 426-428 (GGR) is a binding site for D-glucose 6-phosphate. Residues 438 to 439 (CI) and 542 to 547 (DLGGTN) contribute to the ATP site. A hexokinase small subdomain 2 region spans residues 531–662 (DGSERGDFLA…AVELNVVAIV (132 aa)). Residue 542–546 (DLGGT) coordinates D-glucose 6-phosphate. D-glucose is bound by residues 610–611 (SF), 627–628 (TK), and 663–664 (ND). The interval 663 to 902 (NDTVGTMMSC…CTVTFLQSED (240 aa)) is hexokinase large subdomain 2. Asp664 and Thr687 together coordinate D-glucose 6-phosphate. An ATP-binding site is contributed by Thr687. Residues 689–690 (TN), Glu715, and Glu749 contribute to the D-glucose site. Residues 754–755 (GM), 791–795 (TKFLS), and 870–874 (TLYKL) each bind ATP. Residues 868–870 (DGT) and Ser904 each bind D-glucose 6-phosphate.

Belongs to the hexokinase family.

It catalyses the reaction a D-hexose + ATP = a D-hexose 6-phosphate + ADP + H(+). The catalysed reaction is D-fructose + ATP = D-fructose 6-phosphate + ADP + H(+). The enzyme catalyses D-glucose + ATP = D-glucose 6-phosphate + ADP + H(+). The protein operates within carbohydrate metabolism; hexose metabolism. It functions in the pathway carbohydrate degradation; glycolysis; D-glyceraldehyde 3-phosphate and glycerone phosphate from D-glucose: step 1/4. Hexokinase is an allosteric enzyme inhibited by its product D-glucose 6-phosphate. Its function is as follows. Catalyzes the phosphorylation of hexose, such as D-glucose and D-fructose, to hexose 6-phosphate (D-glucose 6-phosphate and D-fructose 6-phosphate, respectively). Mediates the initial step of glycolysis by catalyzing phosphorylation of D-glucose to D-glucose 6-phosphate. The sequence is that of Hexokinase-3 from Rattus norvegicus (Rat).